The sequence spans 953 residues: Nonsense-mediated mRNA decay factor SMG8 (953 aa).

2 disordered regions span residues A571–P604 and P629–T653. Acidic residues predominate over residues D573–P586. A compositionally biased stretch (polar residues) spans I595 to P604. Low complexity predominate over residues S634–T653.

This sequence belongs to the SMG8 family.

Involved in nonsense-mediated decay (NMD) of mRNAs containing premature stop codons. Probable component of kinase complex containing nonC and recruited to stalled ribosomes. The sequence is that of Nonsense-mediated mRNA decay factor SMG8 from Drosophila pseudoobscura pseudoobscura (Fruit fly).